The following is a 932-amino-acid chain: Adhesion G protein-coupled receptor E2 (932 aa).

An N-terminal signal peptide occupies residues 1–15 (MWGFWLLLFWGFSGT). Residues 16–652 (HRWGMTTLAI…TMEFSLYIIS (637 aa)) lie on the Extracellular side of the membrane. EGF-like domains lie at 32 to 69 (GVNE…SNGQ) and 81 to 119 (DVNE…SAGG). 11 disulfides stabilise this stretch: C36/C48, C42/C57, C85/C98, C92/C107, C137/C149, C143/C158, C160/C171, C177/C189, C183/C198, C226/C239, and C233/C248. Residues 133 to 172 (DVDECLTIGICPKNSNCSNSVGSYSCTCQSGFVSNGSTCE) enclose the EGF-like 3; calcium-binding domain. N148 and N167 each carry an N-linked (GlcNAc...) asparagine glycan. Residues 173–210 (DEDECVTRNACPEHATCHNTLGSYYCTCNEGLEFSGGG) form the EGF-like 4; calcium-binding domain. Residues 222-260 (DVDECSRNSTLCGPSFICINTLGSYSCSCPAGFSLSTFQ) form the EGF-like 5; calcium-binding domain. N-linked (GlcNAc...) asparagine glycosylation is present at N229. N-linked (GlcNAc...) asparagine glycans are attached at residues N269, N283, N309, N333, N344, N363, N405, N417, N474, and N499. Residues 272 to 307 (DIDECDDICPSNSSCTNTLGSYFCTCHPGFASSNGQ) enclose the EGF-like 6; calcium-binding domain. 2 cysteine pairs are disulfide-bonded: C276/C286 and C280/C295. Residues 319–354 (DIDECTQDPFRCGRNSSCTNVPGSYNCSCLPDFRMD) form the EGF-like 7; calcium-binding domain. Cystine bridges form between C323/C336 and C330/C345. In terms of domain architecture, GAIN-B spans 482-643 (EYLEIESKVI…AIIMASGELT (162 aa)). A Cell attachment site motif is present at residues 507 to 509 (RGD). 2 disulfides stabilise this stretch: C596/C625 and C613/C627. The tract at residues 596–643 (CVSWNTDVEDGRWTPSGCETVEASETHTVCSCNRMTNLAIIMASGELT) is GPS. Residues 653–673 (YVGTVISLVCLALAIATFLLF) form a helical membrane-spanning segment. Topologically, residues 674-681 (RAVQNHNT) are cytoplasmic. A helical transmembrane segment spans residues 682–702 (YLHLHLCVCLFLAKILFLTGI). Residues 703–719 (DKTDNQTACAIIAGFLH) lie on the Extracellular side of the membrane. N707 carries N-linked (GlcNAc...) asparagine glycosylation. Residues 720 to 740 (YLFLACFFWMLVEAVMLFLMV) form a helical membrane-spanning segment. The Cytoplasmic segment spans residues 741–756 (RNLKVVNYFSSRNIKM). A helical transmembrane segment spans residues 757-777 (LHLCAFGYGLPVVVVIISATV). At 778–795 (HPWGYGMHNRCWLNTETG) the chain is on the extracellular side. A helical membrane pass occupies residues 796-816 (FIWSFLGPVCMIITINSALLA). The Cytoplasmic portion of the chain corresponds to 817–849 (WTLWVLRQKLCSVNSEVSKLKDTRLLTFKAIAQ). A helical membrane pass occupies residues 850 to 870 (IFILGCSWVLGIFQIGPLASI). The Extracellular portion of the chain corresponds to 871–872 (MA). Residues 873 to 893 (YLFTTINSLQGAFIFLIHCLL) traverse the membrane as a helical segment. The Cytoplasmic segment spans residues 894–932 (NRQVRDEYRKLLTRKTDLSSHSQTSGILLSSMPSTSKTG).

This sequence belongs to the G-protein coupled receptor 2 family. Adhesion G-protein coupled receptor (ADGR) subfamily.

It is found in the cell membrane. In terms of biological role, orphan receptor involved in cell adhesion and probably in cell-cell interactions involved specifically cells of the immune system. May play a role in regulatory T-cells (Treg) development. This is Adhesion G protein-coupled receptor E2 (Adgre1) from Rattus norvegicus (Rat).